A 260-amino-acid chain; its full sequence is MARPHPWWLCVLGTLVGLSATPAPKSCPERHYWAQGKLCCQMCEPGTFLVKDCDQHRKAAQCDPCIPGVSFSPDHHTRPHCESCRHCNSGLLVRNCTITANAECACRNGWQCRDKECTECDPLPNPSLTARSSQALSPHPQPTHLPYVSEMLEARTAGHMQTLADFRQLPARTLSTHWPPQRSLCSSDFIRILVIFSGMFLVFTLAGALFLHQRRKYRSNKGESPVEPAEPCHYSCPREEEGSTIPIQEDYRKPEPACSP.

Residues 1-19 (MARPHPWWLCVLGTLVGLS) form the signal peptide. The Extracellular segment spans residues 20 to 191 (ATPAPKSCPE…RSLCSSDFIR (172 aa)). TNFR-Cys repeat units follow at residues 26–63 (SCPE…AQCD), 64–104 (PCIP…NAEC), and 105–141 (ACRN…PHPQ). 8 disulfides stabilise this stretch: Cys27-Cys39, Cys40-Cys53, Cys43-Cys62, Cys65-Cys81, Cys84-Cys96, Cys87-Cys104, Cys106-Cys120, and Cys112-Cys117. Residue Asn95 is glycosylated (N-linked (GlcNAc...) asparagine). Ser127 carries an O-linked (GalNAc...) serine glycan. The helical transmembrane segment at 192–212 (ILVIFSGMFLVFTLAGALFLH) threads the bilayer. The Cytoplasmic segment spans residues 213-260 (QRRKYRSNKGESPVEPAEPCHYSCPREEEGSTIPIQEDYRKPEPACSP). The residue at position 219 (Ser219) is a Phosphoserine. Positions 219 to 260 (SNKGESPVEPAEPCHYSCPREEEGSTIPIQEDYRKPEPACSP) are disordered. Basic and acidic residues predominate over residues 249-260 (EDYRKPEPACSP).

Homodimer. Interacts with SIVA1; may play a role in apoptosis through association with SIVA1. Interacts with TRAF2. Interacts ith PTPN6. In terms of processing, phosphorylated. Post-translationally, N-glycosylated. O-glycosylated with core 1 or possibly core 8 glycans. As to expression, found in most T-lymphocytes.

It localises to the cell membrane. Costimulatory immune-checkpoint receptor expressed at the surface of T-cells, NK-cells and B-cells which binds to and is activated by its ligand CD70/CD27L expressed by B-cells. The CD70-CD27 signaling pathway mediates antigen-specific T-cell activation and expansion which in turn provides immune surveillance of B-cells. Mechanistically, CD70 ligation activates the TRAF2-PTPN6 axis that subsequently inhibits LCK phosphorylation to promote phenotypic and transcriptional adaptations of T-cell memory. In addition, activation by CD70 on early progenitor cells provides a negative feedback signal to leukocyte differentiation during immune activation and thus modulates hematopoiesis. Negatively regulates the function of Th2 lymphocytes in the adipose tissue. The chain is CD27 antigen from Homo sapiens (Human).